A 508-amino-acid polypeptide reads, in one-letter code: Lysine--tRNA ligase (508 aa).

Residues glutamate 416 and glutamate 423 each coordinate Mg(2+).

It belongs to the class-II aminoacyl-tRNA synthetase family. Homodimer. Mg(2+) serves as cofactor.

The protein localises to the cytoplasm. The enzyme catalyses tRNA(Lys) + L-lysine + ATP = L-lysyl-tRNA(Lys) + AMP + diphosphate. This Prochlorococcus marinus (strain MIT 9313) protein is Lysine--tRNA ligase.